Reading from the N-terminus, the 702-residue chain is Cadmium, zinc and cobalt-transporting ATPase (702 aa).

The Cytoplasmic segment spans residues 1–86; it reads MRLVKQEYVL…HIKKSADDGY (86 aa). Residues 4 to 72 enclose the HMA domain; it reads VKQEYVLDGL…KVKSIDPHVT (69 aa). Positions 15 and 18 each coordinate Cd(2+). Residues cysteine 15 and cysteine 18 each contribute to the Co(2+) site. Zn(2+)-binding residues include cysteine 15 and cysteine 18. A helical transmembrane segment spans residues 87–107; it reads RNRMVNMLIRMAAAVILGAAA. Over 108 to 116 the chain is Extracellular; the sequence is YLVQSGTIE. The chain crosses the membrane as a helical span at residues 117–136; sequence FFLFLGAYLIIGGDIIIRAV. Topologically, residues 137–143 are cytoplasmic; sequence KNIIRGQ. A helical membrane pass occupies residues 144 to 163; sequence VFDEHFLMALATIGAFLIQQ. At 164 to 166 the chain is on the extracellular side; it reads YPE. The helical transmembrane segment at 167 to 186 threads the bilayer; it reads GVAVMLFYQIGELFQGAAVS. Topologically, residues 187 to 320 are cytoplasmic; sequence RSRKSISALM…ITKFAKYYTP (134 aa). The helical transmembrane segment at 321–339 threads the bilayer; it reads AVVIIAVLLAFVPPLVLSG. Over 340–345 the chain is Extracellular; the sequence is AALSDW. The helical transmembrane segment at 346–363 threads the bilayer; the sequence is VYRALIFLVISCPCALVV. Over 364 to 648 the chain is Cytoplasmic; the sequence is SIPLGFFGGI…AIRIAKRTRR (285 aa). Aspartate 401 serves as the catalytic 4-aspartylphosphate intermediate. Residues aspartate 595 and aspartate 599 each coordinate Mg(2+). A helical transmembrane segment spans residues 649–670; it reads IVWQNIGFALGVKAIFLILGAF. Residues 671–678 are Extracellular-facing; sequence GIATMWEA. A helical membrane pass occupies residues 679-694; that stretch reads VFSDVGVTLLAVANAM. Residues 695-702 lie on the Cytoplasmic side of the membrane; sequence RVMRLKNK.

The protein belongs to the cation transport ATPase (P-type) (TC 3.A.3) family. Type IB subfamily.

Its subcellular location is the cell membrane. The enzyme catalyses Zn(2+)(in) + ATP + H2O = Zn(2+)(out) + ADP + phosphate + H(+). It carries out the reaction Cd(2+)(in) + ATP + H2O = Cd(2+)(out) + ADP + phosphate + H(+). Functionally, couples the hydrolysis of ATP with the transport of cadmium, zinc and cobalt out of the cell. Does not seem to transport copper. The chain is Cadmium, zinc and cobalt-transporting ATPase (cadA) from Bacillus subtilis (strain 168).